The following is a 126-amino-acid chain: Heavy metal-associated isoprenylated plant protein 14 (126 aa).

One can recognise an HMA domain in the interval 3–69; the sequence is AKNAVLQLSI…LCNTEIVSVD (67 aa). C123 carries the post-translational modification Cysteine methyl ester. C123 is lipidated: S-farnesyl cysteine. Residues 124 to 126 constitute a propeptide, removed in mature form; sequence VIM.

This sequence belongs to the HIPP family.

In terms of biological role, probable heavy-metal-binding protein. In Arabidopsis thaliana (Mouse-ear cress), this protein is Heavy metal-associated isoprenylated plant protein 14.